The following is a 140-amino-acid chain: HTH-type transcriptional regulator YfmP (140 aa).

The HTH merR-type domain maps to 1–73 (MEWMKIDQVA…LQELQHFMET (73 aa)). The segment at residues 6–25 (IDQVAKRSGLTKRTIRFYEE) is a DNA-binding region (H-T-H motif).

Repressor of the yfmOP operon. A mutation in yfmP leads to overexpression of yfmO, probably causing a decrease in cellular copper that is eventually responsible for a reduced copper induction of copZA. The polypeptide is HTH-type transcriptional regulator YfmP (yfmP) (Bacillus subtilis (strain 168)).